The following is a 232-amino-acid chain: Caffeoyl-CoA O-methyltransferase (232 aa).

K6 provides a ligand contact to substrate. Residues T48, E70, 72–73, S78, D96, and A125 each bind S-adenosyl-L-methionine; that span reads GV. D148 contributes to the substrate binding site. D148 contacts a divalent metal cation. D150 lines the S-adenosyl-L-methionine pocket. D174 and N175 together coordinate a divalent metal cation. N179 is a substrate binding site.

Belongs to the class I-like SAM-binding methyltransferase superfamily. Cation-dependent O-methyltransferase family. CCoAMT subfamily. The cofactor is a divalent metal cation.

It carries out the reaction (E)-caffeoyl-CoA + S-adenosyl-L-methionine = (E)-feruloyl-CoA + S-adenosyl-L-homocysteine + H(+). It participates in aromatic compound metabolism; phenylpropanoid biosynthesis. Its function is as follows. Methylates caffeoyl-CoA to feruloyl-CoA and 5-hydroxyferuloyl-CoA to sinapoyl-CoA. Plays a role in the synthesis of feruloylated polysaccharides. Involved in the reinforcement of the plant cell wall. Also involved in the responding to wounding or pathogen challenge by the increased formation of cell wall-bound ferulic acid polymers. The protein is Caffeoyl-CoA O-methyltransferase of Citrus natsudaidai (Natsudaidai orange).